Here is a 200-residue protein sequence, read N- to C-terminus: MIKLIVGLGNPGAEYAATRHNAGFWLVDQLARMGNVTLRNETRFHGYAARANLWGNEVWLLQPQTFMNRSGLATVALARFYKVMPDEILVVHDELDLPPGTVKLKLGGGSGGHNGLKDIAAHLTTQQFWRLRLGIGHPRNLLPPGTAASGQHDVANFVLKAPRKEEQDLIDRAIDQSLDALPELIAGNAEKAMMRLHTAH.

Tyrosine 15 is a tRNA binding site. Residue histidine 20 is the Proton acceptor of the active site. Phenylalanine 66, asparagine 68, and asparagine 114 together coordinate tRNA.

This sequence belongs to the PTH family. Monomer.

The protein localises to the cytoplasm. It carries out the reaction an N-acyl-L-alpha-aminoacyl-tRNA + H2O = an N-acyl-L-amino acid + a tRNA + H(+). Its function is as follows. Hydrolyzes ribosome-free peptidyl-tRNAs (with 1 or more amino acids incorporated), which drop off the ribosome during protein synthesis, or as a result of ribosome stalling. Catalyzes the release of premature peptidyl moieties from peptidyl-tRNA molecules trapped in stalled 50S ribosomal subunits, and thus maintains levels of free tRNAs and 50S ribosomes. The sequence is that of Peptidyl-tRNA hydrolase from Ralstonia pickettii (strain 12J).